A 253-amino-acid chain; its full sequence is Uridine phosphorylase (253 aa).

Belongs to the PNP/UDP phosphorylase family. Homohexamer.

Its subcellular location is the cytoplasm. The enzyme catalyses uridine + phosphate = alpha-D-ribose 1-phosphate + uracil. It participates in pyrimidine metabolism; UMP biosynthesis via salvage pathway; uracil from uridine (phosphorylase route): step 1/1. Catalyzes the reversible phosphorylytic cleavage of uridine to uracil and ribose-1-phosphate. Shows weak activity towards deoxyuridine and thymidine. The produced molecules are then utilized as carbon and energy sources or in the rescue of pyrimidine bases for nucleotide synthesis. This chain is Uridine phosphorylase, found in Escherichia coli (strain K12).